The following is a 363-amino-acid chain: Ribosomal RNA large subunit methyltransferase M (363 aa).

Residues serine 194, 227–230 (CPGG), aspartate 246, aspartate 266, and aspartate 284 contribute to the S-adenosyl-L-methionine site. The active-site Proton acceptor is lysine 313.

Belongs to the class I-like SAM-binding methyltransferase superfamily. RNA methyltransferase RlmE family. RlmM subfamily. In terms of assembly, monomer.

It is found in the cytoplasm. It carries out the reaction cytidine(2498) in 23S rRNA + S-adenosyl-L-methionine = 2'-O-methylcytidine(2498) in 23S rRNA + S-adenosyl-L-homocysteine + H(+). Its function is as follows. Catalyzes the 2'-O-methylation at nucleotide C2498 in 23S rRNA. In Haemophilus influenzae (strain PittEE), this protein is Ribosomal RNA large subunit methyltransferase M.